Reading from the N-terminus, the 313-residue chain is Foldase protein PrsA (313 aa).

The signal sequence occupies residues 1–20; the sequence is MKKKLLAGAITLLSVATLAA. C21 is lipidated: N-palmitoyl cysteine. A lipid anchor (S-diacylglycerol cysteine) is attached at C21. One can recognise a PpiC domain in the interval 143 to 241; that stretch reads TPDVTAQIIR…SQYYIVKLTK (99 aa).

It belongs to the PrsA family.

It is found in the cell membrane. It carries out the reaction [protein]-peptidylproline (omega=180) = [protein]-peptidylproline (omega=0). Its function is as follows. Plays a major role in protein secretion by helping the post-translocational extracellular folding of several secreted proteins. This chain is Foldase protein PrsA, found in Streptococcus pneumoniae (strain P1031).